Reading from the N-terminus, the 207-residue chain is Ion-translocating oxidoreductase complex subunit B (207 aa).

A hydrophobic region spans residues 1–29; the sequence is MLDLSIIAYLLIAICLIALIFGALLGYFS. The 4Fe-4S domain maps to 35–93; the sequence is EADPIVDQIDAILPQSQCGQCGYPGCKPYAEAIANGDQITKCVPGGQPLVVKIAELMGV. Residues C52, C55, C60, C76, C116, C119, C122, C126, C146, C149, C152, and C156 each coordinate [4Fe-4S] cluster. 4Fe-4S ferredoxin-type domains lie at 107 to 136 and 137 to 166; these read KVAL…GTNK and AMHT…MIKV.

Belongs to the 4Fe4S bacterial-type ferredoxin family. RnfB subfamily. The complex is composed of six subunits: RnfA, RnfB, RnfC, RnfD, RnfE and RnfG. [4Fe-4S] cluster is required as a cofactor.

The protein localises to the cell inner membrane. In terms of biological role, part of a membrane-bound complex that couples electron transfer with translocation of ions across the membrane. This is Ion-translocating oxidoreductase complex subunit B from Haemophilus ducreyi (strain 35000HP / ATCC 700724).